A 660-amino-acid polypeptide reads, in one-letter code: Acetyl-coenzyme A synthetase (660 aa).

Residues 197–200 and T317 contribute to the CoA site; that span reads RGGK. Residues 397-399, 421-426, D512, and R528 each bind ATP; these read GEP and DTFWQT. S536 is a binding site for CoA. An ATP-binding site is contributed by R539. V550 and V555 together coordinate Mg(2+). An N6-acetyllysine modification is found at K625.

Belongs to the ATP-dependent AMP-binding enzyme family. It depends on Mg(2+) as a cofactor. Acetylated. Deacetylation by the SIR2-homolog deacetylase activates the enzyme.

The enzyme catalyses acetate + ATP + CoA = acetyl-CoA + AMP + diphosphate. Its function is as follows. Catalyzes the conversion of acetate into acetyl-CoA (AcCoA), an essential intermediate at the junction of anabolic and catabolic pathways. AcsA undergoes a two-step reaction. In the first half reaction, AcsA combines acetate with ATP to form acetyl-adenylate (AcAMP) intermediate. In the second half reaction, it can then transfer the acetyl group from AcAMP to the sulfhydryl group of CoA, forming the product AcCoA. In Ralstonia nicotianae (strain ATCC BAA-1114 / GMI1000) (Ralstonia solanacearum), this protein is Acetyl-coenzyme A synthetase.